Reading from the N-terminus, the 366-residue chain is MPPKKAAPSKADLAKKQKVVEDKTFGLKNKNKSKNVQKYVQSLHQAVQPKPDPTKTAAKKKKEEEKAREKELNDLFKVAVSQPKVPVGVDPKSIVCEFFKVGQCQKGFKCKFSHDLNVQRKGEKIDIYTDKRDAETMEDWDQETLEKVVASKGAEYQQNKPTDIVCKYFLDAVEKKQYGWFWVCPNGGKDCHYRHALPPGYVLKSQMKALLEEESEKIAIEDEIEDQRKKVKTTTPMTTDLFMEWKRKKAEEREAGLAALRAERAKNDRMSGRELFMADSSVFVDDAEAYDVYERQEESEANEEPSNKNQDEGPSSSTSNGKEVEESDDEDINIDDDLDIDELNELEASLSRTSIQIREPGEGTSS.

A disordered region spans residues L43–K66. The stretch at T54–A79 forms a coiled coil. 2 C3H1-type zinc fingers span residues D90–N117 and K160–P198. A coiled-coil region spans residues K208–T234. Positions Y293–L338 are disordered. Over residues E312–G321 the composition is skewed to polar residues. Residues E325–L338 are compositionally biased toward acidic residues.

In Oryza sativa subsp. japonica (Rice), this protein is Zinc finger CCCH domain-containing protein 11.